Here is a 190-residue protein sequence, read N- to C-terminus: MAVEIAADIRRGNIIEHTDGQLYVVLKAESFRPGKGTPTTTIEMRRISDGIKVVNTFKTSEKLEKAFVEEVEHTYLYPEGDNFVFMNSANYEQVTVSGAMVGDGAPYLQENMPVSLQMFNGDPVSITLPPRFTAEIVETEPVVKGQTASGSYKPAILENGVRIMVPAHVGVGTRVIINTEDGTYLERAKD.

The protein belongs to the elongation factor P family.

The protein resides in the cytoplasm. The protein operates within protein biosynthesis; polypeptide chain elongation. In terms of biological role, involved in peptide bond synthesis. Stimulates efficient translation and peptide-bond synthesis on native or reconstituted 70S ribosomes in vitro. Probably functions indirectly by altering the affinity of the ribosome for aminoacyl-tRNA, thus increasing their reactivity as acceptors for peptidyl transferase. This is Elongation factor P from Hyphomonas neptunium (strain ATCC 15444).